Reading from the N-terminus, the 63-residue chain is Small ribosomal subunit protein bS21 (63 aa).

The protein belongs to the bacterial ribosomal protein bS21 family.

This is Small ribosomal subunit protein bS21 from Azobacteroides pseudotrichonymphae genomovar. CFP2.